The following is a 979-amino-acid chain: Glutamate receptor ionotropic, kainate 5 (979 aa).

Residues 1–14 (MPAELLLLLIVAFA) form the signal peptide. Topologically, residues 15–544 (NPSCQVLSSL…YFSFLDPFSP (530 aa)) are extracellular. 3 disulfides stabilise this stretch: Cys36-Cys292, Cys83-Cys334, and Cys165-Cys170. N-linked (GlcNAc...) asparagine glycosylation is found at Asn219, Asn271, Asn285, Asn322, Asn372, Asn394, Asn400, Asn407, Asn414, and Asn478. Residues 545–565 (AVWLFMLLAYLAVSCVLFLAA) traverse the membrane as a helical segment. Residues 566–622 (RLSPYEWYNPHPCLRARPHILENQYTLGNSLWFPVGGFMQQGSEIMPRALSTRCVSG) lie on the Cytoplasmic side of the membrane. A helical transmembrane segment spans residues 623–643 (VWWAFTLIIISSYTANLAAFL). At 644 to 803 (TVQRMEVPVE…HRAKGLGMEN (160 aa)) the chain is on the extracellular side. Residue Asn735 is glycosylated (N-linked (GlcNAc...) asparagine). A helical transmembrane segment spans residues 804 to 824 (IGGIFVVLICGLIIAVFVAVM). Residues 825-979 (EFIWSTRRSA…TGPRELTEHE (155 aa)) lie on the Cytoplasmic side of the membrane. A compositionally biased stretch (basic residues) spans 856 to 867 (RKTSRSRRRRRP). Disordered regions lie at residues 856-875 (RKTSRSRRRRRPGGPSRALL), 890-925 (LYSAGAGGDAGAHGGPQRLLDDPGPPGGPRPQAPTP), and 942-979 (RASGAGAPPRGLGTPAEATSPPRPRPGPTGPRELTEHE). A compositionally biased stretch (gly residues) spans 894 to 903 (GAGGDAGAHG). Over residues 912–923 (PGPPGGPRPQAP) the composition is skewed to pro residues.

Belongs to the glutamate-gated ion channel (TC 1.A.10.1) family. GRIK5 subfamily. As to quaternary structure, homotetramer. Heterotetramer with GRIK2. Can form functional heteromeric receptors with GRIK1, GRIK2 and GRIK3. Forms a heteromeric complex with GRIK2. In terms of tissue distribution, expressed in the hippocampal mossy fiber synapses (at protein level).

The protein resides in the cell membrane. It localises to the postsynaptic cell membrane. Its subcellular location is the presynaptic cell membrane. Its function is as follows. Ionotropic glutamate receptor that functions as a cation-permeable ligand-gated ion channel, gated by L-glutamate and the glutamatergic agonist kainic acid. Cannot form functional channels on its own and produces channel activity only in heteromeric assembly with GRIK2 subunit. Can form functional heteromeric receptors with GRIK1 and GRIK3. This Mus musculus (Mouse) protein is Glutamate receptor ionotropic, kainate 5 (Grik5).